The primary structure comprises 282 residues: 2-dehydro-3-deoxyphosphooctonate aldolase (282 aa).

Belongs to the KdsA family.

The protein resides in the cytoplasm. It carries out the reaction D-arabinose 5-phosphate + phosphoenolpyruvate + H2O = 3-deoxy-alpha-D-manno-2-octulosonate-8-phosphate + phosphate. Its pathway is carbohydrate biosynthesis; 3-deoxy-D-manno-octulosonate biosynthesis; 3-deoxy-D-manno-octulosonate from D-ribulose 5-phosphate: step 2/3. The protein operates within bacterial outer membrane biogenesis; lipopolysaccharide biosynthesis. The sequence is that of 2-dehydro-3-deoxyphosphooctonate aldolase from Shewanella amazonensis (strain ATCC BAA-1098 / SB2B).